Consider the following 188-residue polypeptide: Acireductone dioxygenase (188 aa).

H97, H99, E103, and H141 together coordinate Fe(2+). Residues H97, H99, E103, and H141 each contribute to the Ni(2+) site.

It belongs to the acireductone dioxygenase (ARD) family. Monomer. It depends on Fe(2+) as a cofactor. Ni(2+) serves as cofactor.

The catalysed reaction is 1,2-dihydroxy-5-(methylsulfanyl)pent-1-en-3-one + O2 = 3-(methylsulfanyl)propanoate + CO + formate + 2 H(+). It carries out the reaction 1,2-dihydroxy-5-(methylsulfanyl)pent-1-en-3-one + O2 = 4-methylsulfanyl-2-oxobutanoate + formate + 2 H(+). It participates in amino-acid biosynthesis; L-methionine biosynthesis via salvage pathway; L-methionine from S-methyl-5-thio-alpha-D-ribose 1-phosphate: step 5/6. In terms of biological role, catalyzes 2 different reactions between oxygen and the acireductone 1,2-dihydroxy-3-keto-5-methylthiopentene (DHK-MTPene) depending upon the metal bound in the active site. Fe-containing acireductone dioxygenase (Fe-ARD) produces formate and 2-keto-4-methylthiobutyrate (KMTB), the alpha-ketoacid precursor of methionine in the methionine recycle pathway. Ni-containing acireductone dioxygenase (Ni-ARD) produces methylthiopropionate, carbon monoxide and formate, and does not lie on the methionine recycle pathway. This Xylella fastidiosa (strain 9a5c) protein is Acireductone dioxygenase.